The sequence spans 429 residues: UPF0597 protein GSU1527 (429 aa).

The protein belongs to the UPF0597 family.

The chain is UPF0597 protein GSU1527 from Geobacter sulfurreducens (strain ATCC 51573 / DSM 12127 / PCA).